The following is a 394-amino-acid chain: Ornithine aminotransferase 1 (394 aa).

An N6-(pyridoxal phosphate)lysine modification is found at Lys252.

The protein belongs to the class-III pyridoxal-phosphate-dependent aminotransferase family. OAT subfamily. It depends on pyridoxal 5'-phosphate as a cofactor.

It is found in the cytoplasm. The catalysed reaction is a 2-oxocarboxylate + L-ornithine = L-glutamate 5-semialdehyde + an L-alpha-amino acid. Its pathway is amino-acid biosynthesis; L-proline biosynthesis; L-glutamate 5-semialdehyde from L-ornithine: step 1/1. Functionally, catalyzes the interconversion of ornithine to glutamate semialdehyde. The chain is Ornithine aminotransferase 1 from Staphylococcus aureus (strain MRSA252).